The sequence spans 582 residues: Phosphoribosylaminoimidazole carboxylase (582 aa).

One can recognise an ATP-grasp domain in the interval 114–305; sequence KKYLAEKGVA…QFENHLRAIL (192 aa). 143–200 serves as a coordination point for ATP; that stretch reads AGRLGLPLMLKAKTLAYDGRGNSPLKSTSSEDIQASLKFLGDRPLYAEGWAPFVKEVA.

The protein in the C-terminal section; belongs to the AIR carboxylase family. Class I subfamily.

It carries out the reaction 5-amino-1-(5-phospho-D-ribosyl)imidazole-4-carboxylate + H(+) = 5-amino-1-(5-phospho-beta-D-ribosyl)imidazole + CO2. It functions in the pathway purine metabolism; IMP biosynthesis via de novo pathway; 5-amino-1-(5-phospho-D-ribosyl)imidazole-4-carboxylate from 5-amino-1-(5-phospho-D-ribosyl)imidazole (carboxylase route): step 1/1. This chain is Phosphoribosylaminoimidazole carboxylase (ADE2), found in Cryptococcus neoformans var. grubii serotype A (strain H99 / ATCC 208821 / CBS 10515 / FGSC 9487) (Filobasidiella neoformans var. grubii).